The following is a 122-amino-acid chain: Small ribosomal subunit protein uS13 (122 aa).

The tract at residues 94–122 (RGLPVRGQRTKTNARQRKGPRPAIGGRKK) is disordered.

The protein belongs to the universal ribosomal protein uS13 family. In terms of assembly, part of the 30S ribosomal subunit. Forms a loose heterodimer with protein S19. Forms two bridges to the 50S subunit in the 70S ribosome.

Its function is as follows. Located at the top of the head of the 30S subunit, it contacts several helices of the 16S rRNA. In the 70S ribosome it contacts the 23S rRNA (bridge B1a) and protein L5 of the 50S subunit (bridge B1b), connecting the 2 subunits; these bridges are implicated in subunit movement. Contacts the tRNAs in the A and P-sites. This chain is Small ribosomal subunit protein uS13, found in Rubrobacter xylanophilus (strain DSM 9941 / JCM 11954 / NBRC 16129 / PRD-1).